The primary structure comprises 530 residues: DEK domain-containing chromatin-associated protein 2 (530 aa).

2 stretches are compositionally biased toward basic and acidic residues: residues 1-47 and 57-68; these read MATE…AEEE and AKEGELGEKDKE. Residues 1–130 are disordered; it reads MATETLDEKT…PSKSVSIEKG (130 aa). Positions 41–61 form a coiled coil; sequence IGEAEEEKKEDEEEGEAKEGE. Acidic residues predominate over residues 69-82; the sequence is DDVESEEEEEEEEG. Basic and acidic residues-rich tracts occupy residues 83–93 and 100–110; these read SGSKKSSEKET and RPTRERKKVER. A coiled-coil region spans residues 185–205; that stretch reads EKEEEKQRARIKEKIDKCVKE. Residues 246 to 430 form a disordered region; the sequence is IIADQEKAKK…GKAKAEPTRK (185 aa). A compositionally biased stretch (basic residues) spans 253–263; the sequence is AKKRKSTPKRG. A Nuclear localization signal 1 motif is present at residues 260 to 267; that stretch reads PKRGKSGE. Residues 286 to 332 are compositionally biased toward acidic residues; it reads SDTEEGKDEGDADSEGTNDPHEEDDAAPEEESDHEKTDTDDEKDEVE. 2 short sequence motifs (nuclear localization signal) span residues 343 to 350 and 384 to 391; these read SKKTVEES and AKKQKVDH. The span at 374–384 shows a compositional bias: polar residues; sequence KQIAKSTSSPA. Over residues 387-397 the composition is skewed to basic and acidic residues; sequence QKVDHVESSKE. The region spanning 426–481 is the DEK-C domain; that stretch reads EPTRKEMLEVVSKILKEVDFNTATLSDILQKLSDHFGVELSHRKPEVKDVITEAIN. DNA-binding regions lie at residues 444–458 and 473–477; these read DFNTATLSDILQKLS and KDVIT. Residues 482–530 are disordered; it reads AMTDDEEEDEEEEAEAGSDKEKEEVKGEEEEEKAEAESDKEKEKEEPKD. Positions 484-497 are enriched in acidic residues; that stretch reads TDDEEEDEEEEAEA. Positions 492–527 form a coiled coil; the sequence is EEEAEAGSDKEKEEVKGEEEEEKAEAESDKEKEKEE. The span at 516–530 shows a compositional bias: basic and acidic residues; the sequence is EAESDKEKEKEEPKD.

As to quaternary structure, found in a mRNA splicing-dependent exon junction complex (EJC). Binds specifically histones H3 and H4.

The protein resides in the nucleus. Its subcellular location is the nucleolus. Functionally, chromatin-associated protein which contributes to the modulation of chromatin structure (such as super-helical structure of DNA) and function. Binds to chromatin of protein-coding genes throughout the genome to regulate nucleosome occupancy and chromatin accessibility, and to modulate the expression of target genes. The chain is DEK domain-containing chromatin-associated protein 2 from Arabidopsis thaliana (Mouse-ear cress).